The sequence spans 315 residues: 4-hydroxy-3-methylbut-2-enyl diphosphate reductase (315 aa).

Cys12 serves as a coordination point for [4Fe-4S] cluster. (2E)-4-hydroxy-3-methylbut-2-enyl diphosphate-binding residues include His43 and His81. His43 and His81 together coordinate dimethylallyl diphosphate. Isopentenyl diphosphate-binding residues include His43 and His81. Residue Cys103 participates in [4Fe-4S] cluster binding. His131 provides a ligand contact to (2E)-4-hydroxy-3-methylbut-2-enyl diphosphate. Position 131 (His131) interacts with dimethylallyl diphosphate. Residue His131 coordinates isopentenyl diphosphate. Catalysis depends on Glu133, which acts as the Proton donor. Thr170 is a (2E)-4-hydroxy-3-methylbut-2-enyl diphosphate binding site. Cys198 serves as a coordination point for [4Fe-4S] cluster. (2E)-4-hydroxy-3-methylbut-2-enyl diphosphate is bound by residues Ser226, Asn228, and Ser271. Residues Ser226, Asn228, and Ser271 each contribute to the dimethylallyl diphosphate site. Isopentenyl diphosphate-binding residues include Ser226, Asn228, and Ser271.

The protein belongs to the IspH family. The cofactor is [4Fe-4S] cluster.

The catalysed reaction is isopentenyl diphosphate + 2 oxidized [2Fe-2S]-[ferredoxin] + H2O = (2E)-4-hydroxy-3-methylbut-2-enyl diphosphate + 2 reduced [2Fe-2S]-[ferredoxin] + 2 H(+). It carries out the reaction dimethylallyl diphosphate + 2 oxidized [2Fe-2S]-[ferredoxin] + H2O = (2E)-4-hydroxy-3-methylbut-2-enyl diphosphate + 2 reduced [2Fe-2S]-[ferredoxin] + 2 H(+). It participates in isoprenoid biosynthesis; dimethylallyl diphosphate biosynthesis; dimethylallyl diphosphate from (2E)-4-hydroxy-3-methylbutenyl diphosphate: step 1/1. The protein operates within isoprenoid biosynthesis; isopentenyl diphosphate biosynthesis via DXP pathway; isopentenyl diphosphate from 1-deoxy-D-xylulose 5-phosphate: step 6/6. Its function is as follows. Catalyzes the conversion of 1-hydroxy-2-methyl-2-(E)-butenyl 4-diphosphate (HMBPP) into a mixture of isopentenyl diphosphate (IPP) and dimethylallyl diphosphate (DMAPP). Acts in the terminal step of the DOXP/MEP pathway for isoprenoid precursor biosynthesis. The chain is 4-hydroxy-3-methylbut-2-enyl diphosphate reductase from Geobacillus sp. (strain WCH70).